A 395-amino-acid chain; its full sequence is Putative pyridoxal phosphate-dependent acyltransferase (395 aa).

Residue 110–111 coordinates pyridoxal 5'-phosphate; it reads GF. Substrate is bound at residue His-135. Pyridoxal 5'-phosphate is bound by residues Ser-185, 210-213, and 240-243; these read DDAH and TLSK. Residue Lys-243 is modified to N6-(pyridoxal phosphate)lysine. A substrate-binding site is contributed by Thr-357.

This sequence belongs to the class-II pyridoxal-phosphate-dependent aminotransferase family. As to quaternary structure, homodimer. Pyridoxal 5'-phosphate serves as cofactor.

The polypeptide is Putative pyridoxal phosphate-dependent acyltransferase (Staphylococcus aureus (strain Mu50 / ATCC 700699)).